A 398-amino-acid chain; its full sequence is 1-deoxy-D-xylulose 5-phosphate reductoisomerase (398 aa).

NADPH-binding residues include Thr-10, Gly-11, Ser-12, Ile-13, Gly-36, Lys-37, Asn-38, and Asn-124. Residue Lys-125 participates in 1-deoxy-D-xylulose 5-phosphate binding. NADPH is bound at residue Glu-126. Asp-150 serves as a coordination point for Mn(2+). 1-deoxy-D-xylulose 5-phosphate-binding residues include Ser-151, Glu-152, Ser-186, and His-209. Glu-152 is a binding site for Mn(2+). Position 215 (Gly-215) interacts with NADPH. 1-deoxy-D-xylulose 5-phosphate contacts are provided by Ser-222, Asn-227, Lys-228, and Glu-231. Glu-231 is a Mn(2+) binding site.

It belongs to the DXR family. Homodimer. Mg(2+) serves as cofactor. Requires Mn(2+) as cofactor.

It carries out the reaction 2-C-methyl-D-erythritol 4-phosphate + NADP(+) = 1-deoxy-D-xylulose 5-phosphate + NADPH + H(+). Its pathway is isoprenoid biosynthesis; isopentenyl diphosphate biosynthesis via DXP pathway; isopentenyl diphosphate from 1-deoxy-D-xylulose 5-phosphate: step 1/6. In terms of biological role, catalyzes the NADPH-dependent rearrangement and reduction of 1-deoxy-D-xylulose-5-phosphate (DXP) to 2-C-methyl-D-erythritol 4-phosphate (MEP). This Salmonella paratyphi A (strain ATCC 9150 / SARB42) protein is 1-deoxy-D-xylulose 5-phosphate reductoisomerase.